The primary structure comprises 175 residues: Zinc metalloproteinase-disintegrin-like catroriarin (175 aa).

The Disintegrin domain occupies 1 to 63 (NPCCDAATCK…ECPADVFHKN (63 aa)). 9 cysteine pairs are disulfide-bonded: C3/C26, C17/C23, C22/C48, C35/C55, C42/C74, C67/C79, C101/C147, C114/C124, and C131/C171. The D/ECD-tripeptide signature appears at 41 to 43 (ECD). Residues D43, P44, E46, D58, and V59 each coordinate Ca(2+).

Belongs to the venom metalloproteinase (M12B) family. P-III subfamily. P-IIIa sub-subfamily. In terms of assembly, monomer. It depends on Zn(2+) as a cofactor. Post-translationally, glycosylated. In terms of tissue distribution, expressed by the venom gland.

Its subcellular location is the secreted. Snake venom metalloproteinase that impairs hemostasis in the envenomed animal. The polypeptide is Zinc metalloproteinase-disintegrin-like catroriarin (Crotalus atrox (Western diamondback rattlesnake)).